The primary structure comprises 691 residues: Elongation factor G (691 aa).

The 276-residue stretch at 8 to 283 folds into the tr-type G domain; it reads KKVRNIGIAA…AVVAYLPAPD (276 aa). GTP is bound by residues 17–24, 81–85, and 135–138; these read AHIDAGKT, DTPGH, and NKMD.

Belongs to the TRAFAC class translation factor GTPase superfamily. Classic translation factor GTPase family. EF-G/EF-2 subfamily.

Its subcellular location is the cytoplasm. Its function is as follows. Catalyzes the GTP-dependent ribosomal translocation step during translation elongation. During this step, the ribosome changes from the pre-translocational (PRE) to the post-translocational (POST) state as the newly formed A-site-bound peptidyl-tRNA and P-site-bound deacylated tRNA move to the P and E sites, respectively. Catalyzes the coordinated movement of the two tRNA molecules, the mRNA and conformational changes in the ribosome. In Campylobacter jejuni subsp. jejuni serotype O:6 (strain 81116 / NCTC 11828), this protein is Elongation factor G.